The sequence spans 129 residues: Histone H2B.2 (129 aa).

Residues 1-19 show a composition bias toward basic and acidic residues; sequence MAPKAEKKPASKAPAEKKP. Positions 1–38 are disordered; it reads MAPKAEKKPASKAPAEKKPAAKKTATSGTKKRSKTRKE. Residues Lys-7 and Lys-8 each carry the N6-acetyllysine; alternate modification. Residues Lys-7 and Lys-8 each participate in a glycyl lysine isopeptide (Lys-Gly) (interchain with G-Cter in SUMO); alternate cross-link. The residue at position 11 (Ser-11) is a Phosphoserine. The residue at position 12 (Lys-12) is an N6-acetyllysine. Position 17 is an N6-acetyllysine; alternate (Lys-17). Residue Lys-17 forms a Glycyl lysine isopeptide (Lys-Gly) (interchain with G-Cter in SUMO); alternate linkage. Lys-18 participates in a covalent cross-link: Glycyl lysine isopeptide (Lys-Gly) (interchain with G-Cter in SUMO). Lys-123 is covalently cross-linked (Glycyl lysine isopeptide (Lys-Gly) (interchain with G-Cter in ubiquitin)).

The protein belongs to the histone H2B family. The nucleosome is a histone octamer containing two molecules each of H2A, H2B, H3 and H4 assembled in one H3-H4 heterotetramer and two H2A-H2B heterodimers. The octamer wraps approximately 147 bp of DNA. In terms of processing, monoubiquitinated by the UBC2-BRE1 complex to form H2BK123ub1. H2BK123ub1 gives a specific tag for epigenetic transcriptional activation and is also prerequisite for H3K4me and H3K79me formation. H2BK123ub1 also modulates the formation of double-strand breaks during meiosis and is a prerequisite for DNA-damage checkpoint activation. Post-translationally, phosphorylated by STE20 to form H2BS10ph during progression through meiotic prophase. May be correlated with chromosome condensation. Acetylated by GCN5 to form H2BK11ac and H2BK16ac. H2BK16ac can also be formed by ESA1. Acetylation of N-terminal lysines and particularly formation of H2BK11acK16ac has a positive effect on transcription. In terms of processing, sumoylation to form H2BK6su or H2BK7su, and probably also H2BK16su or H2BK17su, occurs preferentially near the telomeres and represses gene transcription.

The protein resides in the nucleus. It is found in the chromosome. In terms of biological role, core component of nucleosome. Nucleosomes wrap and compact DNA into chromatin, limiting DNA accessibility to the cellular machineries which require DNA as a template. Histones thereby play a central role in transcription regulation, DNA repair, DNA replication and chromosomal stability. DNA accessibility is regulated via a complex set of post-translational modifications of histones, also called histone code, and nucleosome remodeling. The sequence is that of Histone H2B.2 (HTB2) from Debaryomyces hansenii (strain ATCC 36239 / CBS 767 / BCRC 21394 / JCM 1990 / NBRC 0083 / IGC 2968) (Yeast).